The sequence spans 611 residues: tRNA uridine 5-carboxymethylaminomethyl modification enzyme MnmG (611 aa).

Residues 12-17, Val-124, and Ser-179 each bind FAD; that span reads GGGHAG. 271–285 is a binding site for NAD(+); it reads GPRYCPSVEDKIVRF. Position 368 (Gln-368) interacts with FAD.

Belongs to the MnmG family. As to quaternary structure, homodimer. Heterotetramer of two MnmE and two MnmG subunits. It depends on FAD as a cofactor.

It is found in the cytoplasm. In terms of biological role, NAD-binding protein involved in the addition of a carboxymethylaminomethyl (cmnm) group at the wobble position (U34) of certain tRNAs, forming tRNA-cmnm(5)s(2)U34. The polypeptide is tRNA uridine 5-carboxymethylaminomethyl modification enzyme MnmG (Mycoplasma mobile (strain ATCC 43663 / 163K / NCTC 11711) (Mesomycoplasma mobile)).